A 458-amino-acid chain; its full sequence is Argininosuccinate lyase (458 aa).

This sequence belongs to the lyase 1 family. Argininosuccinate lyase subfamily.

It localises to the cytoplasm. It carries out the reaction 2-(N(omega)-L-arginino)succinate = fumarate + L-arginine. It participates in amino-acid biosynthesis; L-arginine biosynthesis; L-arginine from L-ornithine and carbamoyl phosphate: step 3/3. The chain is Argininosuccinate lyase from Salmonella paratyphi A (strain ATCC 9150 / SARB42).